The sequence spans 124 residues: Transcription initiation factor IIA subunit 2 (124 aa).

The protein belongs to the TFIIA subunit 2 family. TFIIA is a heterodimer composed of the large TOA1 and the small TOA2 subunits.

The protein localises to the nucleus. Its function is as follows. TFIIA is a component of the transcription machinery of RNA polymerase II and plays an important role in transcriptional activation. TFIIA in a complex with tbp mediates transcriptional activity. This is Transcription initiation factor IIA subunit 2 (TOA2) from Cryptococcus neoformans var. neoformans serotype D (strain JEC21 / ATCC MYA-565) (Filobasidiella neoformans).